The chain runs to 370 residues: Cyclic dehypoxanthine futalosine synthase (370 aa).

The 246-residue stretch at 50–295 folds into the Radical SAM core domain; that stretch reads TTFVIGRNVN…QSSWVTMGPE (246 aa). 3 residues coordinate [4Fe-4S] cluster: Cys-64, Cys-68, and Cys-71.

It belongs to the radical SAM superfamily. MqnC family. It depends on [4Fe-4S] cluster as a cofactor.

It carries out the reaction dehypoxanthine futalosine + S-adenosyl-L-methionine = cyclic dehypoxanthinylfutalosinate + 5'-deoxyadenosine + L-methionine + H(+). It participates in quinol/quinone metabolism; menaquinone biosynthesis. In terms of biological role, radical SAM enzyme that catalyzes the cyclization of dehypoxanthine futalosine (DHFL) into cyclic dehypoxanthine futalosine (CDHFL), a step in the biosynthesis of menaquinone (MK, vitamin K2). This Halalkalibacterium halodurans (strain ATCC BAA-125 / DSM 18197 / FERM 7344 / JCM 9153 / C-125) (Bacillus halodurans) protein is Cyclic dehypoxanthine futalosine synthase.